We begin with the raw amino-acid sequence, 404 residues long: O-methyltransferase GME11366 (404 aa).

S-adenosyl-L-methionine-binding positions include 237–238, Asp262, Arg301, and Arg302; that span reads GG. Catalysis depends on His305, which acts as the Proton acceptor.

It belongs to the class I-like SAM-binding methyltransferase superfamily. Cation-independent O-methyltransferase family.

The protein operates within secondary metabolite biosynthesis. Its function is as follows. O-methyltransferase; part of the gene cluster that mediates the biosynthesis of dibenzodioxocinones such as pestalotiollide B, a novel class of inhibitors against cholesterol ester transfer protein (CEPT). The biosynthesis initiates from condensation of acetate and malonate units catalyzed by the non-reducing PKS pks8/GME11356. Pks8/GME11356 lacks a thioesterase (TE) domain, which is important to the cyclizing of the third ring of atrochrysone carboxylic acid, and the esterase GME11355 might play the role of TE and catalyzes the cyclization reaction of the C ring. The lactamase-like protein GME11357 (or other beta-lactamases in Pestalotiopsis microspora) probably hydrolyzes the thioester bond between the ACP of pks8/GME11356 and the intermediate to release atrochrysone carboxylic acid, which is spontaneously dehydrates to form endocrocin anthrone. Endocrocin anthrone is further converted to emodin via the endocrocin intermediate. Emodin is then oxidized by several enzymes such as the Baeyer-Villiger oxidase GME11358, the oxidoreductase GME11367, the short chain dehydrogenase/reductase GME11373, as well as by other oxidoreductases from the cluster, to modify the A and C rings and open the B ring, and finally yield monodictyphenone. The prenyltransferase GME11375 may catalyze the addition reaction between the C5 side chains and the carbon bone of dibenzodioxocinones. The remaining biochemical reactions to the final product dibenzodioxocinones should be methylation catalyzed by methyltransferase GME11366 and reduction and lactonization reaction catalyzed by a series of oxidordeuctases. This is O-methyltransferase GME11366 from Pestalotiopsis microspora.